Reading from the N-terminus, the 182-residue chain is Bifunctional protein PyrR (182 aa).

The PRPP-binding motif lies at 98-110 (VVLVDDVLFTGRS).

The protein belongs to the purine/pyrimidine phosphoribosyltransferase family. PyrR subfamily.

It carries out the reaction UMP + diphosphate = 5-phospho-alpha-D-ribose 1-diphosphate + uracil. In terms of biological role, regulates the transcription of the pyrimidine nucleotide (pyr) operon in response to exogenous pyrimidines. Functionally, also displays a weak uracil phosphoribosyltransferase activity which is not physiologically significant. The polypeptide is Bifunctional protein PyrR (Dehalococcoides mccartyi (strain ATCC BAA-2100 / JCM 16839 / KCTC 5957 / BAV1)).